Consider the following 297-residue polypeptide: uncharacterized protein (297 aa).

It belongs to the glycosyltransferase 2 family.

This is an uncharacterized protein from Mycoplasma genitalium (strain ATCC 33530 / DSM 19775 / NCTC 10195 / G37) (Mycoplasmoides genitalium).